The following is a 559-amino-acid chain: 3-phosphoinositide-dependent protein kinase 1 (559 aa).

Y9 carries the post-translational modification Phosphotyrosine; by SRC and INSR. Residue S25 is modified to Phosphoserine. Positions 25 to 83 (SPSMVRSQTEPGSSPGIPSGVSRQGSTMDGTTAEARPSTNPLQQHPAQLPPQPRKKRPE) are disordered. Low complexity predominate over residues 35-44 (PGSSPGIPSG). A compositionally biased stretch (polar residues) spans 45-54 (VSRQGSTMDG). A Protein kinase domain is found at 85–345 (FKFGKILGEG…YGPLKAHPFF (261 aa)). Residues 95–97 (SFS) and K114 contribute to the ATP site. The interval 116 to 160 (LEKRHIIKENKVPYVTRERDVMSRLDHPFFVKLYFTFQDDEKLYF) is PIF-pocket. ATP contacts are provided by residues 163 to 165 (SYA) and E169. The Proton acceptor role is filled by D208. The ATP site is built by E212 and D226. Residue S244 is modified to Phosphoserine. K307 is modified (N6-acetyllysine). T357 bears the Phosphothreonine; by MELK mark. 2 positions are modified to phosphotyrosine; by SRC and INSR: Y376 and Y379. S396 is modified (phosphoserine). Position 397 is a phosphoserine; by MAP3K5 (S397). Phosphoserine is present on S399. A Phosphoserine; by MAP3K5 modification is found at S401. S413 bears the Phosphoserine mark. Residues 462–553 (KMGPVDKRKG…EVWRQQYQSN (92 aa)) form the PH domain. Residue S504 is modified to Phosphoserine; by PKC/PRKCQ. T516 bears the Phosphothreonine; by autocatalysis mark. Residue S532 is modified to Phosphoserine; by PKC/PRKCQ.

Belongs to the protein kinase superfamily. AGC Ser/Thr protein kinase family. PDPK1 subfamily. In terms of assembly, homodimer in its autoinhibited state. Active as monomer. Interacts with NPRL2, PAK1, PTK2B, GRB14, STRAP and IKKB. The Tyr-9 phosphorylated form interacts with SRC, RASA1 and CRK (via their SH2 domains). Interacts with SGK3 in a phosphorylation-dependent manner. The tyrosine-phosphorylated form interacts with PTPN6. The Ser-244 phosphorylated form interacts with YWHAH and YWHAQ. Binds INSR in response to insulin. Interacts (via PH domain) with SMAD3, SMAD4 and SMAD7. Interacts with PKN2; the interaction stimulates PDPK1 autophosphorylation, its PI(3,4,5)P3-dependent kinase activity toward 'Ser-473' of AKT1 but also activates its kinase activity toward PRKCD and PRKCZ. Interacts with PKN1 (via C-terminus) and PPARG. Phosphorylation on Ser-244 in the activation loop is required for full activity. PDPK1 itself can autophosphorylate Ser-244, leading to its own activation. Autophosphorylation is inhibited by the apoptotic C-terminus cleavage product of PKN2. Tyr-9 phosphorylation is critical for stabilization of both PDPK1 and the PDPK1/SRC complex via HSP90-mediated protection of PDPK1 degradation. Angiotensin II stimulates the tyrosine phosphorylation of PDPK1 in vascular smooth muscle in a calcium- and SRC-dependent manner. Phosphorylated on Tyr-9, Tyr-376 and Tyr-379 by INSR in response to insulin. Palmitate negatively regulates autophosphorylation at Ser-244 and palmitate-induced phosphorylation at Ser-532 and Ser-504 by PKC/PRKCQ negatively regulates its ability to phosphorylate PKB/AKT1. Phosphorylation at Thr-357 by MELK partially inhibits kinase activity, the inhibition is cooperatively enhanced by phosphorylation at Ser-397 and Ser-401 by MAP3K5. Post-translationally, monoubiquitinated in the kinase domain, deubiquitinated by USP4. As to expression, highly expressed in heart, brain, liver and testis, also expressed in embryonic cells.

Its subcellular location is the cytoplasm. The protein resides in the nucleus. It localises to the cell membrane. It is found in the cell junction. The protein localises to the focal adhesion. It catalyses the reaction L-seryl-[protein] + ATP = O-phospho-L-seryl-[protein] + ADP + H(+). The catalysed reaction is L-threonyl-[protein] + ATP = O-phospho-L-threonyl-[protein] + ADP + H(+). Its activity is regulated as follows. Homodimerization regulates its activity by maintaining the kinase in an autoinhibitory conformation. NPRL2 down-regulates its activity by interfering with tyrosine phosphorylation at the Tyr-9, Tyr-376 and Tyr-379 residues. The 14-3-3 protein YWHAQ acts as a negative regulator by association with the residues surrounding the Ser-244 residue. STRAP positively regulates its activity by enhancing its autophosphorylation and by stimulating its dissociation from YWHAQ. SMAD2, SMAD3, SMAD4 and SMAD7 also positively regulate its activity by stimulating its dissociation from YWHAQ. Activated by phosphorylation on Tyr-9, Tyr-376 and Tyr-379 by INSR in response to insulin. Serine/threonine kinase which acts as a master kinase, phosphorylating and activating a subgroup of the AGC family of protein kinases. Its targets include: protein kinase B (PKB/AKT1, PKB/AKT2, PKB/AKT3), p70 ribosomal protein S6 kinase (RPS6KB1), p90 ribosomal protein S6 kinase (RPS6KA1, RPS6KA2 and RPS6KA3), cyclic AMP-dependent protein kinase (PRKACA), protein kinase C (PRKCD and PRKCZ), serum and glucocorticoid-inducible kinase (SGK1, SGK2 and SGK3), p21-activated kinase-1 (PAK1), TSSK3, protein kinase PKN (PKN1 and PKN2). Plays a central role in the transduction of signals from insulin by providing the activating phosphorylation to PKB/AKT1, thus propagating the signal to downstream targets controlling cell proliferation and survival, as well as glucose and amino acid uptake and storage. Negatively regulates the TGF-beta-induced signaling by: modulating the association of SMAD3 and SMAD7 with TGF-beta receptor, phosphorylating SMAD2, SMAD3, SMAD4 and SMAD7, preventing the nuclear translocation of SMAD3 and SMAD4 and the translocation of SMAD7 from the nucleus to the cytoplasm in response to TGF-beta. Activates PPARG transcriptional activity and promotes adipocyte differentiation. Activates the NF-kappa-B pathway via phosphorylation of IKKB. The tyrosine phosphorylated form is crucial for the regulation of focal adhesions by angiotensin II. Controls proliferation, survival, and growth of developing pancreatic cells. Participates in the regulation of Ca(2+) entry and Ca(2+)-activated K(+) channels of mast cells. Essential for the motility of vascular endothelial cells (ECs) and is involved in the regulation of their chemotaxis. Plays a critical role in cardiac homeostasis by serving as a dual effector for cell survival and beta-adrenergic response. Plays an important role during thymocyte development by regulating the expression of key nutrient receptors on the surface of pre-T cells and mediating Notch-induced cell growth and proliferative responses. Provides negative feedback inhibition to toll-like receptor-mediated NF-kappa-B activation in macrophages. This chain is 3-phosphoinositide-dependent protein kinase 1 (Pdpk1), found in Mus musculus (Mouse).